The chain runs to 206 residues: Large ribosomal subunit protein uL4 (206 aa).

Residues 45–75 (RQGTHSTKTRGEVRGGGRKPWRQKGTGRARQ) form a disordered region. The span at 60–71 (GGRKPWRQKGTG) shows a compositional bias: basic residues.

This sequence belongs to the universal ribosomal protein uL4 family. Part of the 50S ribosomal subunit.

Functionally, one of the primary rRNA binding proteins, this protein initially binds near the 5'-end of the 23S rRNA. It is important during the early stages of 50S assembly. It makes multiple contacts with different domains of the 23S rRNA in the assembled 50S subunit and ribosome. In terms of biological role, forms part of the polypeptide exit tunnel. This Thermoanaerobacter pseudethanolicus (strain ATCC 33223 / 39E) (Clostridium thermohydrosulfuricum) protein is Large ribosomal subunit protein uL4.